The sequence spans 235 residues: Probable transcriptional regulatory protein MPN_478 (235 aa).

The protein belongs to the TACO1 family.

It is found in the cytoplasm. This Mycoplasma pneumoniae (strain ATCC 29342 / M129 / Subtype 1) (Mycoplasmoides pneumoniae) protein is Probable transcriptional regulatory protein MPN_478.